A 296-amino-acid polypeptide reads, in one-letter code: Homoserine kinase (296 aa).

An ATP-binding site is contributed by 85–95; the sequence is PVARGLGSSAA.

Belongs to the GHMP kinase family. Homoserine kinase subfamily.

Its subcellular location is the cytoplasm. The catalysed reaction is L-homoserine + ATP = O-phospho-L-homoserine + ADP + H(+). Its pathway is amino-acid biosynthesis; L-threonine biosynthesis; L-threonine from L-aspartate: step 4/5. In terms of biological role, catalyzes the ATP-dependent phosphorylation of L-homoserine to L-homoserine phosphate. The sequence is that of Homoserine kinase from Moorella thermoacetica (strain ATCC 39073 / JCM 9320).